A 44-amino-acid polypeptide reads, in one-letter code: Large ribosomal subunit protein bL34 (44 aa).

Belongs to the bacterial ribosomal protein bL34 family.

In Neorickettsia sennetsu (strain ATCC VR-367 / Miyayama) (Ehrlichia sennetsu), this protein is Large ribosomal subunit protein bL34.